The chain runs to 222 residues: 2-C-methyl-D-erythritol 2,4-cyclodiphosphate synthase, chloroplastic (222 aa).

The transit peptide at 1–43 (MATASSLFLASPVATAPTARARSTPSASPARPSLRLRRPSTLA) directs the protein to the chloroplast. A divalent metal cation contacts are provided by Asp73 and His75. Substrate contacts are provided by residues 73 to 75 (DLH), 99 to 100 (HS), 103 to 111 (DVLLHCVVD), 121 to 123 (DIG), 126 to 130 (FPDSD), Asp130, 165 to 171 (LQKPKIS), and 196 to 200 (AKTHE). His107 serves as a coordination point for a divalent metal cation.

This sequence belongs to the IspF family. Homotrimer. Requires a divalent metal cation as cofactor. In terms of tissue distribution, expressed in roots, leaves, stems, leaf sheaths and young panicles.

Its subcellular location is the plastid. The protein localises to the chloroplast. The enzyme catalyses 4-CDP-2-C-methyl-D-erythritol 2-phosphate = 2-C-methyl-D-erythritol 2,4-cyclic diphosphate + CMP. Its pathway is isoprenoid biosynthesis; isopentenyl diphosphate biosynthesis via DXP pathway; isopentenyl diphosphate from 1-deoxy-D-xylulose 5-phosphate: step 4/6. In terms of biological role, enzyme of the plastid non-mevalonate pathway for isoprenoid biosynthesis that converts 4-diphosphocytidyl-2C-methyl-D-erythritol 2-phosphate into 2C-methyl-D-erythritol 2,4-cyclodiphosphate and CMP. Is essential for chloroplast development. In Oryza sativa subsp. japonica (Rice), this protein is 2-C-methyl-D-erythritol 2,4-cyclodiphosphate synthase, chloroplastic.